Consider the following 254-residue polypeptide: Agamous-like MADS-box protein AGL9 homolog (254 aa).

An MADS-box domain is found at 3–57; that stretch reads RGRVELKRIENKINRQVTFAKRRNGLLKKAYELSVLCDAEVALIIFSNRGKLYEF. The K-box domain occupies 91-181; sequence ELSSQQEYLK…RLRLADGYQM (91 aa).

The protein localises to the nucleus. Its function is as follows. Probable transcription factor active in inflorescence development and floral organogenesis. In Sinapis alba (White mustard), this protein is Agamous-like MADS-box protein AGL9 homolog (AGL9).